A 273-amino-acid polypeptide reads, in one-letter code: Type III pantothenate kinase (273 aa).

5 to 12 (DVGNSHVV) is an ATP binding site. 112 to 115 (GTDL) provides a ligand contact to substrate. The Proton acceptor role is filled by aspartate 114. Aspartate 134 provides a ligand contact to K(+). Threonine 137 contacts ATP. Position 189 (threonine 189) interacts with substrate.

Belongs to the type III pantothenate kinase family. Homodimer. It depends on NH4(+) as a cofactor. Requires K(+) as cofactor.

It localises to the cytoplasm. It catalyses the reaction (R)-pantothenate + ATP = (R)-4'-phosphopantothenate + ADP + H(+). It participates in cofactor biosynthesis; coenzyme A biosynthesis; CoA from (R)-pantothenate: step 1/5. Its function is as follows. Catalyzes the phosphorylation of pantothenate (Pan), the first step in CoA biosynthesis. This is Type III pantothenate kinase from Treponema pallidum (strain Nichols).